Consider the following 151-residue polypeptide: Protein SprT-like (151 aa).

In terms of domain architecture, SprT-like spans 6–148 (LQALVERISL…FCRGKLKKIK (143 aa)). Position 67 (H67) interacts with Zn(2+). The active site involves E68. A Zn(2+)-binding site is contributed by H71.

The protein belongs to the SprT family. The cofactor is Zn(2+).

Its subcellular location is the cytoplasm. The sequence is that of Protein SprT-like from Anoxybacillus flavithermus (strain DSM 21510 / WK1).